A 585-amino-acid polypeptide reads, in one-letter code: SCF E3 ubiquitin ligase complex F-box protein grrA (585 aa).

The segment covering 1-10 (MARSRQPTRF) has biased composition (polar residues). Disordered regions lie at residues 1 to 34 (MARS…DTDF) and 41 to 60 (DSQS…QNDP). A compositionally biased stretch (low complexity) spans 11–25 (SSEAPSESSSSTSPE). The 49-residue stretch at 65–113 (PPIAYLPPEILISIFSKLSSPRDLLSCLLVCRIWALNCVGLLWHRPSCN) folds into the F-box domain. 13 LRR repeats span residues 147–171 (TEDV…TLTN), 172–197 (CRKL…DVSE), 198–223 (LRSL…NITG), 224–249 (CVKV…KLNG), 250–275 (VSQV…DLQE), 276–301 (CKLV…RLAH), 302–329 (CTEI…DLTA), 330–355 (CENI…VLAK), 356–381 (CKFI…HLGH), 382–407 (CSNI…DLAC), 408–432 (CSRL…GLVK), 433–465 (CQLI…HLSY), and 466–491 (CVNL…SLTG).

Part of a SCF E3 ubiquitin ligase complex. In terms of tissue distribution, specifically expressed in ascus mother cells.

The protein resides in the cytoplasm. Its function is as follows. Involved in meiosis and required for ascospore formation. Involved in substrate recognition in ubiquitin-dependent degradation. The polypeptide is SCF E3 ubiquitin ligase complex F-box protein grrA (grrA) (Emericella nidulans (strain FGSC A4 / ATCC 38163 / CBS 112.46 / NRRL 194 / M139) (Aspergillus nidulans)).